A 556-amino-acid chain; its full sequence is Glutamine--tRNA ligase (556 aa).

Residues 34-44 (PEPNGYLHIGH) carry the 'HIGH' region motif. ATP contacts are provided by residues 35–37 (EPN) and 41–47 (HIGHAKS). 2 residues coordinate L-glutamine: Asp67 and Tyr212. ATP is bound by residues Thr231, 261 to 262 (RL), and 269 to 271 (MSK). The 'KMSKS' region motif lies at 268 to 272 (VMSKR).

This sequence belongs to the class-I aminoacyl-tRNA synthetase family. Monomer.

The protein localises to the cytoplasm. The catalysed reaction is tRNA(Gln) + L-glutamine + ATP = L-glutaminyl-tRNA(Gln) + AMP + diphosphate. The polypeptide is Glutamine--tRNA ligase (Vibrio vulnificus (strain YJ016)).